A 156-amino-acid polypeptide reads, in one-letter code: Pheromone-binding protein Gp-9 (156 aa).

A signal peptide spans 1–19; that stretch reads MKTFVFHIFIFALVAFASA. Cystine bridges form between cysteine 37–cysteine 77, cysteine 73–cysteine 129, and cysteine 118–cysteine 138.

Belongs to the PBP/GOBP family. In terms of assembly, homodimer.

It localises to the secreted. Its function is as follows. Colony queen number, a major feature of social organization, is associated with worker genotype for Gp-9. Colonies are headed by either a single reproductive queen (monogyne form) or multiple queens (polygyne form). Differences in worker Gp-9 genotypes between social forms may cause differences in workers' abilities to recognize queens and regulate their numbers. This is Pheromone-binding protein Gp-9 from Solenopsis globularia littoralis (Fire ant).